The following is a 248-amino-acid chain: Endonuclease V (248 aa).

Residues aspartate 54 and aspartate 118 each coordinate Mg(2+).

This sequence belongs to the endonuclease V family. Mg(2+) serves as cofactor.

The protein resides in the cytoplasm. It carries out the reaction Endonucleolytic cleavage at apurinic or apyrimidinic sites to products with a 5'-phosphate.. Its function is as follows. DNA repair enzyme involved in the repair of deaminated bases. Selectively cleaves double-stranded DNA at the second phosphodiester bond 3' to a deoxyinosine leaving behind the intact lesion on the nicked DNA. This chain is Endonuclease V, found in Natronomonas pharaonis (strain ATCC 35678 / DSM 2160 / CIP 103997 / JCM 8858 / NBRC 14720 / NCIMB 2260 / Gabara) (Halobacterium pharaonis).